The sequence spans 482 residues: tRNA sulfurtransferase (482 aa).

Residues 61–165 enclose the THUMP domain; that stretch reads LAIRDALTRI…DDRLLLIKGR (105 aa). ATP is bound by residues 183-184, lysine 265, glycine 287, and glutamine 296; that span reads LI. Cysteine 344 and cysteine 456 are joined by a disulfide. Residues 404 to 482 enclose the Rhodanese domain; the sequence is FGANDVILDI…GFANVKVYRP (79 aa). Residue cysteine 456 is the Cysteine persulfide intermediate of the active site.

It belongs to the ThiI family.

Its subcellular location is the cytoplasm. It carries out the reaction [ThiI sulfur-carrier protein]-S-sulfanyl-L-cysteine + a uridine in tRNA + 2 reduced [2Fe-2S]-[ferredoxin] + ATP + H(+) = [ThiI sulfur-carrier protein]-L-cysteine + a 4-thiouridine in tRNA + 2 oxidized [2Fe-2S]-[ferredoxin] + AMP + diphosphate. The catalysed reaction is [ThiS sulfur-carrier protein]-C-terminal Gly-Gly-AMP + S-sulfanyl-L-cysteinyl-[cysteine desulfurase] + AH2 = [ThiS sulfur-carrier protein]-C-terminal-Gly-aminoethanethioate + L-cysteinyl-[cysteine desulfurase] + A + AMP + 2 H(+). Its pathway is cofactor biosynthesis; thiamine diphosphate biosynthesis. Catalyzes the ATP-dependent transfer of a sulfur to tRNA to produce 4-thiouridine in position 8 of tRNAs, which functions as a near-UV photosensor. Also catalyzes the transfer of sulfur to the sulfur carrier protein ThiS, forming ThiS-thiocarboxylate. This is a step in the synthesis of thiazole, in the thiamine biosynthesis pathway. The sulfur is donated as persulfide by IscS. The chain is tRNA sulfurtransferase from Salmonella typhi.